We begin with the raw amino-acid sequence, 364 residues long: tRNA 2-selenouridine synthase (364 aa).

Residues 12–135 (FLNDRPMMDT…MRTFLLDTTE (124 aa)) form the Rhodanese domain. Cysteine 95 (S-selanylcysteine intermediate) is an active-site residue.

Belongs to the SelU family. Monomer.

The catalysed reaction is 5-methylaminomethyl-2-thiouridine(34) in tRNA + selenophosphate + (2E)-geranyl diphosphate + H2O + H(+) = 5-methylaminomethyl-2-selenouridine(34) in tRNA + (2E)-thiogeraniol + phosphate + diphosphate. It carries out the reaction 5-methylaminomethyl-2-thiouridine(34) in tRNA + (2E)-geranyl diphosphate = 5-methylaminomethyl-S-(2E)-geranyl-thiouridine(34) in tRNA + diphosphate. The enzyme catalyses 5-methylaminomethyl-S-(2E)-geranyl-thiouridine(34) in tRNA + selenophosphate + H(+) = 5-methylaminomethyl-2-(Se-phospho)selenouridine(34) in tRNA + (2E)-thiogeraniol. It catalyses the reaction 5-methylaminomethyl-2-(Se-phospho)selenouridine(34) in tRNA + H2O = 5-methylaminomethyl-2-selenouridine(34) in tRNA + phosphate. In terms of biological role, involved in the post-transcriptional modification of the uridine at the wobble position (U34) of tRNA(Lys), tRNA(Glu) and tRNA(Gln). Catalyzes the conversion of 2-thiouridine (S2U-RNA) to 2-selenouridine (Se2U-RNA). Acts in a two-step process involving geranylation of 2-thiouridine (S2U) to S-geranyl-2-thiouridine (geS2U) and subsequent selenation of the latter derivative to 2-selenouridine (Se2U) in the tRNA chain. This chain is tRNA 2-selenouridine synthase, found in Pseudomonas fluorescens (strain ATCC BAA-477 / NRRL B-23932 / Pf-5).